Here is a 397-residue protein sequence, read N- to C-terminus: Enoyl-[acyl-carrier-protein] reductase [NADH] (397 aa).

Residues 48 to 53, 74 to 75, 111 to 112, and 139 to 140 contribute to the NAD(+) site; these read GASTGY, FE, DA, and LA. Tyrosine 225 provides a ligand contact to substrate. Catalysis depends on tyrosine 235, which acts as the Proton donor. NAD(+)-binding positions include lysine 244 and 273–275; that span reads VVT.

This sequence belongs to the TER reductase family. In terms of assembly, monomer.

The catalysed reaction is a 2,3-saturated acyl-[ACP] + NAD(+) = a (2E)-enoyl-[ACP] + NADH + H(+). It participates in lipid metabolism; fatty acid biosynthesis. Involved in the final reduction of the elongation cycle of fatty acid synthesis (FAS II). Catalyzes the reduction of a carbon-carbon double bond in an enoyl moiety that is covalently linked to an acyl carrier protein (ACP). In Pseudoalteromonas translucida (strain TAC 125), this protein is Enoyl-[acyl-carrier-protein] reductase [NADH].